The primary structure comprises 202 residues: Small ribosomal subunit protein uS4 (202 aa).

The S4 RNA-binding domain maps to 91-168; sequence SRLSSILYNS…HKVPDYLEVD (78 aa).

This sequence belongs to the universal ribosomal protein uS4 family. Part of the 30S ribosomal subunit. Contacts protein S5. The interaction surface between S4 and S5 is involved in control of translational fidelity.

One of the primary rRNA binding proteins, it binds directly to 16S rRNA where it nucleates assembly of the body of the 30S subunit. Its function is as follows. With S5 and S12 plays an important role in translational accuracy. This chain is Small ribosomal subunit protein uS4, found in Ehrlichia canis (strain Jake).